Here is a 245-residue protein sequence, read N- to C-terminus: 4-hydroxy-tetrahydrodipicolinate reductase (245 aa).

Residues 7–12, 75–77, and 102–105 each bind NAD(+); these read GARGKV, GTT, and APNF. The active-site Proton donor/acceptor is the His-132. His-133 is a (S)-2,3,4,5-tetrahydrodipicolinate binding site. Lys-136 serves as the catalytic Proton donor. Residue 142 to 143 coordinates (S)-2,3,4,5-tetrahydrodipicolinate; it reads GT.

This sequence belongs to the DapB family.

It is found in the cytoplasm. It carries out the reaction (S)-2,3,4,5-tetrahydrodipicolinate + NAD(+) + H2O = (2S,4S)-4-hydroxy-2,3,4,5-tetrahydrodipicolinate + NADH + H(+). The catalysed reaction is (S)-2,3,4,5-tetrahydrodipicolinate + NADP(+) + H2O = (2S,4S)-4-hydroxy-2,3,4,5-tetrahydrodipicolinate + NADPH + H(+). The protein operates within amino-acid biosynthesis; L-lysine biosynthesis via DAP pathway; (S)-tetrahydrodipicolinate from L-aspartate: step 4/4. In terms of biological role, catalyzes the conversion of 4-hydroxy-tetrahydrodipicolinate (HTPA) to tetrahydrodipicolinate. This chain is 4-hydroxy-tetrahydrodipicolinate reductase, found in Mycolicibacterium smegmatis (strain ATCC 700084 / mc(2)155) (Mycobacterium smegmatis).